A 175-amino-acid chain; its full sequence is Austinoid biosynthesis cluster protein F (175 aa).

This sequence belongs to the trt14 isomerase family. In terms of assembly, homodimer.

It functions in the pathway secondary metabolite biosynthesis; terpenoid biosynthesis. Its function is as follows. Part of the gene cluster that mediates the biosynthesis of calidodehydroaustin, a fungal meroterpenoid. The first step of the pathway is the synthesis of 3,5-dimethylorsellinic acid by the polyketide synthase ausA. 3,5-dimethylorsellinic acid is then prenylated by the polyprenyl transferase ausN. Further epoxidation by the FAD-dependent monooxygenase ausM and cyclization by the probable terpene cyclase ausL lead to the formation of protoaustinoid A. Protoaustinoid A is then oxidized to spiro-lactone preaustinoid A3 by the combined action of the FAD-binding monooxygenases ausB and ausC, and the dioxygenase ausE. Acid-catalyzed keto-rearrangement and ring contraction of the tetraketide portion of preaustinoid A3 by ausJ lead to the formation of preaustinoid A4. The aldo-keto reductase ausK, with the help of ausH, is involved in the next step by transforming preaustinoid A4 into isoaustinone which is in turn hydroxylated by the P450 monooxygenase ausI to form austinolide. The cytochrome P450 monooxygenase ausG modifies austinolide to austinol. Austinol is further acetylated to austin by the O-acetyltransferase ausP, which spontaneously changes to dehydroaustin. The cytochrome P450 monooxygenase ausR then converts dehydroaustin is into 7-dehydrodehydroaustin. The hydroxylation catalyzed by ausR permits the O-acetyltransferase ausQ to add an additional acetyl group to the molecule, leading to the formation of acetoxydehydroaustin. The short chain dehydrogenase ausT catalyzes the reduction of the double bond present between carbon atoms 1 and 2 to convert 7-dehydrodehydroaustin into 1,2-dihydro-7-hydroxydehydroaustin. AusQ catalyzes not only an acetylation reaction but also the addition of the PKS ausV diketide product to 1,2-dihydro-7-hydroxydehydroaustin, forming precalidodehydroaustin. Finally, the iron/alpha-ketoglutarate-dependent dioxygenase converts precalidodehydroaustin into calidodehydroaustin. The chain is Austinoid biosynthesis cluster protein F from Aspergillus calidoustus.